Here is a 586-residue protein sequence, read N- to C-terminus: Arginine--tRNA ligase (586 aa).

The short motif at 131–141 (ANPTGPLHVGH) is the 'HIGH' region element.

It belongs to the class-I aminoacyl-tRNA synthetase family. As to quaternary structure, monomer.

It localises to the cytoplasm. The catalysed reaction is tRNA(Arg) + L-arginine + ATP = L-arginyl-tRNA(Arg) + AMP + diphosphate. The sequence is that of Arginine--tRNA ligase from Nitrosomonas eutropha (strain DSM 101675 / C91 / Nm57).